A 201-amino-acid polypeptide reads, in one-letter code: Probable phosphopantothenoylcysteine decarboxylase (201 aa).

Residues 20–22 (GSV), 45–47 (SKS), 98–101 (SANT), and Ala132 each bind FMN. Residues Asn134 and 164–166 (KLA) each bind substrate. The active-site Proton donor is Cys167. Met175 is a substrate binding site.

Belongs to the HFCD (homooligomeric flavin containing Cys decarboxylase) superfamily. In terms of assembly, homotrimer. The cofactor is FMN. In terms of tissue distribution, expressed in roots, shoots, leaves, flowers, developing siliques and seeds.

It carries out the reaction N-[(R)-4-phosphopantothenoyl]-L-cysteine + H(+) = (R)-4'-phosphopantetheine + CO2. Its pathway is cofactor biosynthesis; coenzyme A biosynthesis; CoA from (R)-pantothenate: step 3/5. Its function is as follows. Involved in plant growth and salt and osmotic tolerance. Catalyzes the decarboxylation of 4'-phosphopantothenoylcysteine to 4'-phosphopantetheine, a key step in coenzyme A biosynthesis. The enzyme is also able to decarboxylate pantothenoylcysteine to pantothenoylcysteamine. In Arabidopsis thaliana (Mouse-ear cress), this protein is Probable phosphopantothenoylcysteine decarboxylase (HAL3B).